The chain runs to 259 residues: Protein odd-skipped-related 1 (259 aa).

C2H2-type zinc fingers lie at residues 168–190 (FVCK…ERTH), 196–218 (YTCD…RYIH), and 224–246 (FKCQ…KTLH).

This sequence belongs to the Odd C2H2-type zinc-finger protein family.

It localises to the nucleus. Functionally, transcriptional repressor. Required for pronephric kidney development. The chain is Protein odd-skipped-related 1 from Xenopus tropicalis (Western clawed frog).